The following is a 180-amino-acid chain: Thioredoxin 3 (180 aa).

The Cytoplasmic portion of the chain corresponds to 1 to 3 (MAL). Residues 4-24 (ICIGSVCFSLFHIGVIILLII) traverse the membrane as a helical; Signal-anchor for type II membrane protein segment. Residues 25 to 180 (NYFSSHIKKI…FQKYCLEKAK (156 aa)) are Lumenal-facing. The Thioredoxin domain occupies 29–176 (SHIKKIFPSF…IEKAFQKYCL (148 aa)). Catalysis depends on nucleophile residues C99 and C102. A disulfide bond links C99 and C102.

The protein belongs to the thioredoxin family. Post-translationally, the disulfide bond between Cys-99 and Cys-102 acts as a redox-active center and is reduced by thioredoxin reductase TRXR.

It localises to the endoplasmic reticulum membrane. In terms of biological role, participates in various redox reactions through the reversible oxidation of its active center dithiol to a disulfide and catalyzes dithiol-disulfide exchange reactions. This is Thioredoxin 3 from Plasmodium falciparum (isolate 3D7).